A 921-amino-acid polypeptide reads, in one-letter code: Retinoblastoma-associated protein (921 aa).

2 disordered regions span residues 1-31 and 603-634; these read MPPK…PPGG and RSPK…QKPQ. The segment covering 612–634 has biased composition (polar residues); sequence HPQSGTSNPDAQPSATSQTQKPQ. Residues 853–869 carry the Bipartite nuclear localization signal motif; it reads KRSAEPSDAPKPLKRLR. Residues 873–921 are disordered; sequence EGQDEADGGKHLPQESKFQQKLAEMTSTRTRMQKQKLNDGNDTSANEEK. The segment covering 910-921 has biased composition (polar residues); sequence NDGNDTSANEEK.

It belongs to the retinoblastoma protein (RB) family. As to quaternary structure, interacts with and sequesters the E2F1 transcription factor, thereby inhibiting E2F1 transcription. Interacts with SUV39H1, KMT5B and KMT5C. In terms of assembly, (Microbial infection) Interacts with, and is inhibited by fowl adenovirus 1 protein GAM-1. Post-translationally, phosphorylated in G1, thereby releasing E2F1 which is then able to activate cell growth. Dephosphorylated at the late M phase. Phosphorylation of domain C promotes interaction between the C-terminal domain C and the Pocket domain, and thereby inhibits interactions with heterodimeric E2F/DP transcription factor complexes.

It localises to the nucleus. The protein localises to the cytoplasm. Its function is as follows. Tumor suppressor that is a key regulator of the G1/S transition of the cell cycle. The hypophosphorylated form binds transcription regulators of the E2F family, preventing transcription of E2F-responsive genes. Both physically blocks E2Fs transactivating domain and recruits chromatin-modifying enzymes that actively repress transcription. Cyclin and CDK-dependent phosphorylation of RB1 induces its dissociation from E2Fs, thereby activating transcription of E2F responsive genes and triggering entry into S phase. RB1 also promotes the G0-G1 transition upon phosphorylation and activation by CDK3/cyclin-C. The chain is Retinoblastoma-associated protein (RB1) from Gallus gallus (Chicken).